Consider the following 179-residue polypeptide: Large ribosomal subunit protein bL9 (179 aa).

The protein belongs to the bacterial ribosomal protein bL9 family.

Binds to the 23S rRNA. This Bartonella bacilliformis (strain ATCC 35685 / KC583 / Herrer 020/F12,63) protein is Large ribosomal subunit protein bL9.